We begin with the raw amino-acid sequence, 78 residues long: Structural DNA-binding protein p10 (78 aa).

Over residues methionine 1–alanine 25 the composition is skewed to low complexity. The tract at residues methionine 1–glycine 41 is disordered.

The protein belongs to the asfivirus P10 family.

It is found in the virion. In terms of biological role, may play a role in genome packaging through direct interaction with viral DNA. Binds to ssDNA and dsDNA with the same apparent affinity in vitro. This is Structural DNA-binding protein p10 from African swine fever virus (isolate Warthog/Namibia/Wart80/1980) (ASFV).